The primary structure comprises 282 residues: Bifunctional protein FolD (282 aa).

Residues 165-167 and Ile-231 contribute to the NADP(+) site; that span reads GAS.

This sequence belongs to the tetrahydrofolate dehydrogenase/cyclohydrolase family. Homodimer.

The catalysed reaction is (6R)-5,10-methylene-5,6,7,8-tetrahydrofolate + NADP(+) = (6R)-5,10-methenyltetrahydrofolate + NADPH. It catalyses the reaction (6R)-5,10-methenyltetrahydrofolate + H2O = (6R)-10-formyltetrahydrofolate + H(+). It functions in the pathway one-carbon metabolism; tetrahydrofolate interconversion. Functionally, catalyzes the oxidation of 5,10-methylenetetrahydrofolate to 5,10-methenyltetrahydrofolate and then the hydrolysis of 5,10-methenyltetrahydrofolate to 10-formyltetrahydrofolate. In Francisella tularensis subsp. tularensis (strain FSC 198), this protein is Bifunctional protein FolD.